The following is a 248-amino-acid chain: tRNA (guanine-N(1)-)-methyltransferase (248 aa).

Residues Gly113 and 133–138 contribute to the S-adenosyl-L-methionine site; that span reads IGDYVL. Residues 227 to 248 form a disordered region; it reads RPAQTIRAKGESQKTPKNKTDG. Residues 234-248 show a composition bias toward basic and acidic residues; the sequence is AKGESQKTPKNKTDG.

It belongs to the RNA methyltransferase TrmD family. In terms of assembly, homodimer.

Its subcellular location is the cytoplasm. The catalysed reaction is guanosine(37) in tRNA + S-adenosyl-L-methionine = N(1)-methylguanosine(37) in tRNA + S-adenosyl-L-homocysteine + H(+). Specifically methylates guanosine-37 in various tRNAs. This is tRNA (guanine-N(1)-)-methyltransferase from Rhodopseudomonas palustris (strain TIE-1).